The chain runs to 169 residues: Endoribonuclease YbeY (169 aa).

Zn(2+) is bound by residues His117, His121, and His127.

The protein belongs to the endoribonuclease YbeY family. The cofactor is Zn(2+).

It localises to the cytoplasm. Single strand-specific metallo-endoribonuclease involved in late-stage 70S ribosome quality control and in maturation of the 3' terminus of the 16S rRNA. This chain is Endoribonuclease YbeY, found in Mesoplasma florum (strain ATCC 33453 / NBRC 100688 / NCTC 11704 / L1) (Acholeplasma florum).